Consider the following 896-residue polypeptide: Trehalose-phosphatase (896 aa).

The tract at residues 1–554 is glycosyltransferase; it reads MTTTAQDNSP…SNDDMERKMT (554 aa).

This sequence in the N-terminal section; belongs to the glycosyltransferase 20 family. It in the C-terminal section; belongs to the trehalose phosphatase family. The trehalose synthase complex is composed of the two catalytic subunits TPS1 and TPS2, and at least one of the two regulatory subunits TPS3 or TSL1. Mg(2+) is required as a cofactor.

Its subcellular location is the cytoplasm. The catalysed reaction is alpha,alpha-trehalose 6-phosphate + H2O = alpha,alpha-trehalose + phosphate. It participates in carbohydrate biosynthesis. With respect to regulation, inhibited by EDTA. In terms of biological role, phosphatase catalytic subunit of the trehalose synthase complex that catalyzes the production of trehalose from glucose-6-phosphate and UDP-alpha-D-glucose in a two step process. This Saccharomyces cerevisiae (strain ATCC 204508 / S288c) (Baker's yeast) protein is Trehalose-phosphatase.